The primary structure comprises 885 residues: Envelope glycoprotein B (885 aa).

A signal peptide spans 1–34 (MRPRGTPPSFLPLPVLLALAVIAAAGRAAPAAAA). Residues 29–46 (APAAAAAPTADPAATPAL) are compositionally biased toward low complexity. The tract at residues 29–74 (APAAAAAPTADPAATPALPEDEEVPDEDGEGVATPAPAANASVEAG) is disordered. Residues 35–759 (APTADPAATP…SGVSSFLSNP (725 aa)) lie on the Virion surface side of the membrane. The segment covering 47 to 58 (PEDEEVPDEDGE) has biased composition (acidic residues). N-linked (GlcNAc...) asparagine; by host glycosylation is found at asparagine 68 and asparagine 122. 5 disulfides stabilise this stretch: cysteine 97/cysteine 558, cysteine 114/cysteine 514, cysteine 188/cysteine 252, cysteine 345/cysteine 393, and cysteine 581/cysteine 618. Involved in fusion and/or binding to host membrane stretches follow at residues 154-160 (VWFGHRY) and 239-246 (RVEAFHRY). 2 N-linked (GlcNAc...) asparagine; by host glycosylation sites follow: asparagine 379 and asparagine 411. Positions 455–478 (RRPAGGDPGEAATPGPSVDPPSVE) are disordered. N-linked (GlcNAc...) asparagine; by host glycosylation occurs at asparagine 659. Hydrophobic membrane proximal region stretches follow at residues 704 to 757 (IDTV…SFLS) and 716 to 756 (LFAG…SSFL). Residues 760 to 780 (FGALAVGLLVLAGLAAAFFAF) traverse the membrane as a helical segment. Over 781 to 885 (RYVMRLQRNP…PLRDTDEEEL (105 aa)) the chain is Intravirion. A Golgi targeting motif is present at residues 834 to 837 (YMAL). The segment at 866–885 (MRKRARPRYSPLRDTDEEEL) is disordered. The Internalization motif signature appears at 874–877 (YSPL).

This sequence belongs to the herpesviridae glycoprotein B family. Homotrimer; disulfide-linked. Binds to heparan sulfate proteoglycans. Interacts with gH/gL heterodimer.

The protein localises to the virion membrane. It is found in the host cell membrane. The protein resides in the host endosome membrane. Its subcellular location is the host Golgi apparatus membrane. Functionally, envelope glycoprotein that forms spikes at the surface of virion envelope. Essential for the initial attachment to heparan sulfate moieties of the host cell surface proteoglycans. Involved in fusion of viral and cellular membranes leading to virus entry into the host cell. Following initial binding to its host receptors, membrane fusion is mediated by the fusion machinery composed at least of gB and the heterodimer gH/gL. May be involved in the fusion between the virion envelope and the outer nuclear membrane during virion egress. In Herpes simplex virus type 2 (strain SA8) (Simian agent 8), this protein is Envelope glycoprotein B.